A 318-amino-acid polypeptide reads, in one-letter code: Aspartate carbamoyltransferase catalytic subunit (318 aa).

Carbamoyl phosphate-binding residues include Arg58 and Thr59. Lys86 serves as a coordination point for L-aspartate. Positions 108, 141, and 144 each coordinate carbamoyl phosphate. Residues Arg174 and Arg226 each coordinate L-aspartate. Positions 270 and 271 each coordinate carbamoyl phosphate.

The protein belongs to the aspartate/ornithine carbamoyltransferase superfamily. ATCase family. As to quaternary structure, heterododecamer (2C3:3R2) of six catalytic PyrB chains organized as two trimers (C3), and six regulatory PyrI chains organized as three dimers (R2).

The enzyme catalyses carbamoyl phosphate + L-aspartate = N-carbamoyl-L-aspartate + phosphate + H(+). Its pathway is pyrimidine metabolism; UMP biosynthesis via de novo pathway; (S)-dihydroorotate from bicarbonate: step 2/3. Its function is as follows. Catalyzes the condensation of carbamoyl phosphate and aspartate to form carbamoyl aspartate and inorganic phosphate, the committed step in the de novo pyrimidine nucleotide biosynthesis pathway. The polypeptide is Aspartate carbamoyltransferase catalytic subunit (Lactobacillus helveticus (strain DPC 4571)).